Reading from the N-terminus, the 634-residue chain is Leucine--tRNA ligase subunit alpha (634 aa).

Positions 43–51 match the 'HIGH' region motif; sequence PSGRIHMGH.

It belongs to the class-I aminoacyl-tRNA synthetase family. As to quaternary structure, seems to consist of an alpha chain and a beta chain.

It localises to the cytoplasm. The enzyme catalyses tRNA(Leu) + L-leucine + ATP = L-leucyl-tRNA(Leu) + AMP + diphosphate. This chain is Leucine--tRNA ligase subunit alpha (leuS), found in Aquifex aeolicus (strain VF5).